A 737-amino-acid polypeptide reads, in one-letter code: Cellulose synthase-like protein E1 (737 aa).

The next 2 helical transmembrane spans lie at 26–45 (AVYRVQAATVAAGILLVLYY) and 58–78 (AAWLGMAAAELWFAVYWVIAQ). Residues Asp146 and Asp451 contribute to the active site. Transmembrane regions (helical) follow at residues 528 to 548 (LWAANSLPTLYYVVIPSLGLV), 551 to 571 (TPLFPQIMSPWATPFIYVFCV), 654 to 674 (VIIATVALLNFVCLVGGLSQI), 683 to 703 (WNVFLPQAILCGMIVIINMPI), and 716 to 736 (IPTAVTLASIGFVMLAFLVPI).

This sequence belongs to the glycosyltransferase 2 family. Plant cellulose synthase-like E subfamily.

It is found in the golgi apparatus membrane. In terms of biological role, thought to be a Golgi-localized beta-glycan synthase that polymerize the backbones of noncellulosic polysaccharides (hemicelluloses) of plant cell wall. The chain is Cellulose synthase-like protein E1 (CSLE1) from Oryza sativa subsp. japonica (Rice).